Here is a 184-residue protein sequence, read N- to C-terminus: Peptide deformylase (184 aa).

The Fe cation site is built by Cys98 and His140. Glu141 is a catalytic residue. His144 contacts Fe cation.

This sequence belongs to the polypeptide deformylase family. Fe(2+) is required as a cofactor.

It catalyses the reaction N-terminal N-formyl-L-methionyl-[peptide] + H2O = N-terminal L-methionyl-[peptide] + formate. Its function is as follows. Removes the formyl group from the N-terminal Met of newly synthesized proteins. Requires at least a dipeptide for an efficient rate of reaction. N-terminal L-methionine is a prerequisite for activity but the enzyme has broad specificity at other positions. The protein is Peptide deformylase of Bacteroides fragilis (strain ATCC 25285 / DSM 2151 / CCUG 4856 / JCM 11019 / LMG 10263 / NCTC 9343 / Onslow / VPI 2553 / EN-2).